A 101-amino-acid chain; its full sequence is Protein RnfH (101 aa).

It belongs to the UPF0125 (RnfH) family.

This chain is Protein RnfH, found in Pseudomonas aeruginosa (strain LESB58).